Here is a 334-residue protein sequence, read N- to C-terminus: Transcription initiation factor IIB (334 aa).

The TFIIB-type zinc finger occupies 34-65 (TESVCPECKSRQLVHDYERAELVCQNCGLVID). The Zn(2+) site is built by cysteine 38, cysteine 41, cysteine 57, and cysteine 60. Repeat copies occupy residues 151 to 234 (SELD…SREL) and 245 to 326 (DYVP…ELAE).

This sequence belongs to the TFIIB family.

In terms of biological role, stabilizes TBP binding to an archaeal box-A promoter. Also responsible for recruiting RNA polymerase II to the pre-initiation complex (DNA-TBP-TFIIB). In Methanosphaerula palustris (strain ATCC BAA-1556 / DSM 19958 / E1-9c), this protein is Transcription initiation factor IIB.